A 209-amino-acid chain; its full sequence is Chaperone protein TorD (209 aa).

This sequence belongs to the TorD/DmsD family. TorD subfamily.

It localises to the cytoplasm. Its function is as follows. Involved in the biogenesis of TorA. Acts on TorA before the insertion of the molybdenum cofactor and, as a result, probably favors a conformation of the apoenzyme that is competent for acquiring the cofactor. The chain is Chaperone protein TorD from Shewanella baltica (strain OS155 / ATCC BAA-1091).